The chain runs to 555 residues: Glutamine--tRNA ligase (555 aa).

A 'HIGH' region motif is present at residues Pro34–His44. ATP is bound by residues Glu35–Asn37 and His41–Ser47. Residues Asp67 and Tyr212 each coordinate L-glutamine. ATP contacts are provided by residues Thr231, Arg261 to Leu262, and Met269 to Lys271. Residues Val268–Arg272 carry the 'KMSKS' region motif. Residues Thr317–Glu324 form an interaction with tRNA region.

It belongs to the class-I aminoacyl-tRNA synthetase family. As to quaternary structure, monomer.

It localises to the cytoplasm. It carries out the reaction tRNA(Gln) + L-glutamine + ATP = L-glutaminyl-tRNA(Gln) + AMP + diphosphate. The sequence is that of Glutamine--tRNA ligase from Salmonella schwarzengrund (strain CVM19633).